A 463-amino-acid chain; its full sequence is Chromosomal replication initiator protein DnaA (463 aa).

The tract at residues 1–83 (MSTNQIILTD…LQLFQHYNNT (83 aa)) is domain I, interacts with DnaA modulators. Positions 83–124 (TIKSIEIITKELPGTTQTVTELPTKTFADIGSSELNSENIFS) are domain II. Residues 125-343 (TLDVRFTFDN…GALNKVIAHS (219 aa)) are domain III, AAA+ region. ATP-binding residues include G171, G173, K174, and T175. A domain IV, binds dsDNA region spans residues 344 to 463 (NFTLKEITLE…IHLLMKILQN (120 aa)).

Belongs to the DnaA family. In terms of assembly, oligomerizes as a right-handed, spiral filament on DNA at oriC.

It localises to the cytoplasm. Functionally, plays an essential role in the initiation and regulation of chromosomal replication. ATP-DnaA binds to the origin of replication (oriC) to initiate formation of the DNA replication initiation complex once per cell cycle. Binds the DnaA box (a 9 base pair repeat at the origin) and separates the double-stranded (ds)DNA. Forms a right-handed helical filament on oriC DNA; dsDNA binds to the exterior of the filament while single-stranded (ss)DNA is stabiized in the filament's interior. The ATP-DnaA-oriC complex binds and stabilizes one strand of the AT-rich DNA unwinding element (DUE), permitting loading of DNA polymerase. After initiation quickly degrades to an ADP-DnaA complex that is not apt for DNA replication. Binds acidic phospholipids. The chain is Chromosomal replication initiator protein DnaA from Rickettsia africae (strain ESF-5).